Here is a 100-residue protein sequence, read N- to C-terminus: Urease subunit gamma (100 aa).

The protein belongs to the urease gamma subunit family. Heterotrimer of UreA (gamma), UreB (beta) and UreC (alpha) subunits. Three heterotrimers associate to form the active enzyme.

The protein localises to the cytoplasm. It catalyses the reaction urea + 2 H2O + H(+) = hydrogencarbonate + 2 NH4(+). Its pathway is nitrogen metabolism; urea degradation; CO(2) and NH(3) from urea (urease route): step 1/1. The polypeptide is Urease subunit gamma (Paracidovorax citrulli (strain AAC00-1) (Acidovorax citrulli)).